We begin with the raw amino-acid sequence, 88 residues long: DNA-directed RNA polymerase subunit omega (88 aa).

Belongs to the RNA polymerase subunit omega family. In terms of assembly, the RNAP catalytic core consists of 2 alpha, 1 beta, 1 beta' and 1 omega subunit. When a sigma factor is associated with the core the holoenzyme is formed, which can initiate transcription.

It carries out the reaction RNA(n) + a ribonucleoside 5'-triphosphate = RNA(n+1) + diphosphate. Promotes RNA polymerase assembly. Latches the N- and C-terminal regions of the beta' subunit thereby facilitating its interaction with the beta and alpha subunits. The protein is DNA-directed RNA polymerase subunit omega of Actinobacillus succinogenes (strain ATCC 55618 / DSM 22257 / CCUG 43843 / 130Z).